We begin with the raw amino-acid sequence, 99 residues long: DNA-binding protein HU (99 aa).

Belongs to the bacterial histone-like protein family. Homodimer.

Its function is as follows. Histone-like DNA-binding protein which is capable of wrapping DNA to stabilize it, and thus to prevent its denaturation under extreme environmental conditions. In Rickettsia typhi (strain ATCC VR-144 / Wilmington), this protein is DNA-binding protein HU (hup).